Here is a 1282-residue protein sequence, read N- to C-terminus: Crescerin-like protein che-12 (1282 aa).

TOG stretches follow at residues 33 to 240 (DFDT…EHTE) and 268 to 515 (PSLV…MDSF). 8 HEAT repeats span residues 59–96 (QKKGELFKCIDKIICDDRWELQHQCIKFLVEAMPTFGS), 100–137 (YCMCFVMPNLIPKLVSNKVTVRKITHQAIATFLRLKPE), 162–209 (ELHH…FIGN), 261–300 (RLRFGIVPSLVCALIAEDTDANQRISGLEKMKQVVDQITP), 308–345 (PHLHSYLLMLSNVLEDLNFKVVVLALDIVRATGHHLKG), 349–386 (AHIQQFVNLVAKHFGNQKSVIKQIIMMTFMELFQNINP), 388–421 (TVGGCLRVFLENKNSRVREEVINIYTASLMTISP), and 424–461 (FNLQPLVNILVPMFHDVKKRVRLAAFEQLSVLAYLLNG). Residues 566–714 (IQQQGQAEKP…RSFDDRPAKA (149 aa)) form a disordered region. 2 stretches are compositionally biased toward low complexity: residues 575-592 (PSFSLPQQPAQQASHQAQ) and 633-644 (SAASNPNSSTSS). Basic and acidic residues predominate over residues 702–712 (DPPRSFDDRPA). 2 TOG regions span residues 800–1022 (NMSV…ANVE) and 1066–1282 (TELL…ALIR). 7 HEAT repeats span residues 838-875 (DNLKEVIIAILNECKNLRSSVSRVAIVTIGTVAQNLNS), 879-917 (SEMEKICAVLLSKSGDVSNAFIRDDATDSLNKLVKAATA), 919-953 (KALQGIILAGAKSKNNTIRSSCANFVYDIITIQGS), 961-998 (NALSNVLPVLLQFSRDQSPQVRNPGKQSLCFLSKDPNF), 1095-1132 (ASDTRLIEAFISRLGDTNGKVASCAMETYISTMGSMAK), 1177-1214 (IEPVSLLPAMTSATKKSNVKQRPFILTQYCELSKLAYK), and 1219-1258 (QVEVMALPLLWDSVKNSAPDVDNKKATQYLAKTLAKLIGE).

The protein belongs to the Crescerin family. In terms of tissue distribution, detected in a subset of amphid neurons that lack wing- or finger-like ciliary extensions. Likewise, detected in phasmid neurons.

The protein resides in the cell projection. Its subcellular location is the cilium. It localises to the perikaryon. It is found in the dendrite. Required for normal structure and function of sensory cilia on amphid neurons, especially for the formation of distal ciliary structures, but is less important for normal assembly of middle and basal ciliary structures. Plays a role in the organization of axoneme microtubule bundles in sensory cilia. Required for normal structure and function of the ASER neuron that mediates attraction to NaCl. Required for normal chemotaxis to NaCl. Required for normal avoidance response to high osmolarity. In contrast, is not required for normal chemotaxis to isoamyl alcohol. Does not play a role in intraflagella transport (IFT). Promotes dauer formation in response to pheromones such as the ascarosides ascr#2, ascr#3, ascr#5, ascr#8 and icas#9. The protein is Crescerin-like protein che-12 of Caenorhabditis elegans.